Reading from the N-terminus, the 87-residue chain is Diazepam-binding inhibitor-like 5 (87 aa).

The ACB domain occupies Ser2–Cys87. Residues Tyr29–Lys33, Lys55, and Tyr74 each bind an acyl-CoA.

Belongs to the ACBP family. Exclusively expressed in late spermatids and spermatozoa. Not found in epididymis, spleen, bone marrow, skin, liver, brain, heart, kidney, muscle.

It is found in the cytoplasm. Functionally, may be involved in the energy metabolism of the mature sperm. The chain is Diazepam-binding inhibitor-like 5 (Dbil5) from Mus musculus (Mouse).